The chain runs to 339 residues: Ketol-acid reductoisomerase (NADP(+)) (339 aa).

The KARI N-terminal Rossmann domain maps to 1–182 (MRVYYDRDAD…GGGRAGIIET (182 aa)). NADP(+)-binding positions include 24–27 (YGSQ), R48, S51, S53, and 83–86 (DELQ). Residue H108 is part of the active site. G134 provides a ligand contact to NADP(+). The KARI C-terminal knotted domain maps to 183–328 (TFREECETDL…ARLRDMMPWI (146 aa)). Positions 191, 195, 227, and 231 each coordinate Mg(2+). S252 is a binding site for substrate.

This sequence belongs to the ketol-acid reductoisomerase family. Mg(2+) is required as a cofactor.

The catalysed reaction is (2R)-2,3-dihydroxy-3-methylbutanoate + NADP(+) = (2S)-2-acetolactate + NADPH + H(+). The enzyme catalyses (2R,3R)-2,3-dihydroxy-3-methylpentanoate + NADP(+) = (S)-2-ethyl-2-hydroxy-3-oxobutanoate + NADPH + H(+). The protein operates within amino-acid biosynthesis; L-isoleucine biosynthesis; L-isoleucine from 2-oxobutanoate: step 2/4. It functions in the pathway amino-acid biosynthesis; L-valine biosynthesis; L-valine from pyruvate: step 2/4. In terms of biological role, involved in the biosynthesis of branched-chain amino acids (BCAA). Catalyzes an alkyl-migration followed by a ketol-acid reduction of (S)-2-acetolactate (S2AL) to yield (R)-2,3-dihydroxy-isovalerate. In the isomerase reaction, S2AL is rearranged via a Mg-dependent methyl migration to produce 3-hydroxy-3-methyl-2-ketobutyrate (HMKB). In the reductase reaction, this 2-ketoacid undergoes a metal-dependent reduction by NADPH to yield (R)-2,3-dihydroxy-isovalerate. This is Ketol-acid reductoisomerase (NADP(+)) from Nitrobacter winogradskyi (strain ATCC 25391 / DSM 10237 / CIP 104748 / NCIMB 11846 / Nb-255).